Reading from the N-terminus, the 309-residue chain is Coproporphyrin III ferrochelatase (309 aa).

Fe-coproporphyrin III is bound by residues Tyr12, Arg29, 45–46 (RY), Ser53, and Tyr124. The Fe(2+) site is built by His182 and Glu263.

This sequence belongs to the ferrochelatase family.

It localises to the cytoplasm. It catalyses the reaction Fe-coproporphyrin III + 2 H(+) = coproporphyrin III + Fe(2+). It functions in the pathway porphyrin-containing compound metabolism; protoheme biosynthesis. Its function is as follows. Involved in coproporphyrin-dependent heme b biosynthesis. Catalyzes the insertion of ferrous iron into coproporphyrin III to form Fe-coproporphyrin III. The chain is Coproporphyrin III ferrochelatase from Listeria innocua serovar 6a (strain ATCC BAA-680 / CLIP 11262).